Here is an 82-residue protein sequence, read N- to C-terminus: Turripeptide Gsp9.1 (82 aa).

A signal peptide spans 1–23; it reads MMAKLMITVMMVLLLSLQQGADG. The propeptide occupies 24-46; the sequence is RSKRWRKNQMAASSIMRNLITAR. 4-hydroxyproline is present on residues Pro-49 and Pro-50. Disulfide bonds link Cys-53–Cys-68, Cys-58–Cys-72, and Cys-64–Cys-79. 2 positions are modified to 4-carboxyglutamate: Glu-60 and Glu-63.

The protein belongs to the Pg turripeptide superfamily. Expressed by the venom duct.

It localises to the secreted. This Gemmula speciosa (Splendid gem-turris) protein is Turripeptide Gsp9.1.